Consider the following 349-residue polypeptide: N-formyl peptide receptor 3 (349 aa).

Residues methionine 1–isoleucine 27 lie on the Extracellular side of the membrane. N-linked (GlcNAc...) asparagine glycosylation is found at asparagine 4 and asparagine 10. The helical transmembrane segment at phenylalanine 28–valine 50 threads the bilayer. Topologically, residues alanine 51–threonine 61 are cytoplasmic. Residues isoleucine 62–valine 83 form a helical membrane-spanning segment. The Extracellular segment spans residues serine 84 to leucine 100. Cysteines 98 and 176 form a disulfide. The chain crosses the membrane as a helical span at residues valine 101–leucine 121. The Cytoplasmic portion of the chain corresponds to aspartate 122–serine 140. A helical transmembrane segment spans residues leucine 141–isoleucine 162. The Extracellular portion of the chain corresponds to phenylalanine 163–histidine 205. The helical transmembrane segment at phenylalanine 206 to alanine 226 threads the bilayer. At lysine 227 to valine 242 the chain is on the cytoplasmic side. A helical transmembrane segment spans residues phenylalanine 243–valine 266. The Extracellular segment spans residues tryptophan 267 to proline 286. The helical transmembrane segment at threonine 287–glycine 306 threads the bilayer. Over serine 307–glutamate 349 the chain is Cytoplasmic. Positions valine 328–glutamate 349 are disordered. Over residues serine 331–serine 343 the composition is skewed to polar residues.

This sequence belongs to the G-protein coupled receptor 1 family.

It localises to the cell membrane. Functionally, low affinity receptor for N-formyl-methionyl peptides, which are powerful neutrophils chemotactic factors. Binding of FMLP to the receptor causes activation of neutrophils. This response is mediated via a G-protein that activates a phosphatidylinositol-calcium second messenger system. The sequence is that of N-formyl peptide receptor 3 (FPR3) from Pongo pygmaeus (Bornean orangutan).